Here is a 121-residue protein sequence, read N- to C-terminus: Large ribosomal subunit protein uL18 (121 aa).

The protein belongs to the universal ribosomal protein uL18 family. In terms of assembly, part of the 50S ribosomal subunit; part of the 5S rRNA/L5/L18/L25 subcomplex. Contacts the 5S and 23S rRNAs.

Functionally, this is one of the proteins that bind and probably mediate the attachment of the 5S RNA into the large ribosomal subunit, where it forms part of the central protuberance. The protein is Large ribosomal subunit protein uL18 of Acidovorax ebreus (strain TPSY) (Diaphorobacter sp. (strain TPSY)).